A 599-amino-acid polypeptide reads, in one-letter code: Serine hydroxymethyltransferase 6 (599 aa).

The interval 1-25 (MDRIAQSDLSLGFGSSHALPLPHPP) is disordered. Lysine 374 is modified (N6-(pyridoxal phosphate)lysine).

Belongs to the SHMT family. Homotetramer. Requires pyridoxal 5'-phosphate as cofactor.

Its subcellular location is the cytoplasm. It catalyses the reaction (6R)-5,10-methylene-5,6,7,8-tetrahydrofolate + glycine + H2O = (6S)-5,6,7,8-tetrahydrofolate + L-serine. Its pathway is one-carbon metabolism; tetrahydrofolate interconversion. In terms of biological role, catalyzes the interconversion of serine and glycine. In Arabidopsis thaliana (Mouse-ear cress), this protein is Serine hydroxymethyltransferase 6 (SHM6).